A 67-amino-acid polypeptide reads, in one-letter code: DNA-directed RNA polymerase subunit omega (67 aa).

It belongs to the RNA polymerase subunit omega family. The RNAP catalytic core consists of 2 alpha, 1 beta, 1 beta' and 1 omega subunit. When a sigma factor is associated with the core the holoenzyme is formed, which can initiate transcription.

It catalyses the reaction RNA(n) + a ribonucleoside 5'-triphosphate = RNA(n+1) + diphosphate. Promotes RNA polymerase assembly. Latches the N- and C-terminal regions of the beta' subunit thereby facilitating its interaction with the beta and alpha subunits. The chain is DNA-directed RNA polymerase subunit omega from Bordetella petrii (strain ATCC BAA-461 / DSM 12804 / CCUG 43448).